Reading from the N-terminus, the 249-residue chain is Galactan endo-beta-1,3-galactanase (249 aa).

Residues 1–21 form the signal peptide; that stretch reads MKLFVVLACLAAPGTFPFVDA. Residues 34-247 enclose the GH16 domain; that stretch reads STYWNNFYPW…KARNVQVTRT (214 aa). N-linked (GlcNAc...) asparagine glycosylation is present at N48. E138 functions as the Nucleophile in the catalytic mechanism. The active-site Proton donor is E143. A glycan (N-linked (GlcNAc...) asparagine) is linked at N156.

The protein belongs to the glycosyl hydrolase 16 family. N-glycosylated.

The enzyme catalyses The enzyme specifically hydrolyzes beta-1,3-galactan and beta-1,3-galactooligosaccharides.. In terms of biological role, specifically hydrolyzes beta-1,3-galactan in an endo-fashion. Requires at least 3 contiguous beta-1,3-residues. The sequence is that of Galactan endo-beta-1,3-galactanase (EN3GAL) from Flammulina velutipes (Agaricus velutipes).